We begin with the raw amino-acid sequence, 327 residues long: Interleukin-12 subunit beta (327 aa).

The signal sequence occupies residues 1-22 (MHPQQLVVSWFSLVLLASPIVA). One can recognise an Ig-like C2-type domain in the interval 23–106 (MWELEKNVYV…LSRSLLLLHK (84 aa)). Residues cysteine 50 and cysteine 90 are joined by a disulfide bond. Asparagine 223 carries an N-linked (GlcNAc...) asparagine glycan. The Fibronectin type-III domain maps to 238–327 (PPKNLQLRPL…WSEWASVSCS (90 aa)).

Belongs to the IL-12B family. In terms of assembly, heterodimer with IL12A; disulfide-linked. The heterodimer is known as interleukin IL-12. Heterodimer with IL23A; disulfide-linked. The heterodimer is known as interleukin IL-23. Also secreted as a monomer. Interacts with NBR1; this interaction promotes IL-12 secretion.

The protein resides in the secreted. In terms of biological role, cytokine that can act as a growth factor for activated T and NK cells, enhance the lytic activity of NK/lymphokine-activated killer cells, and stimulate the production of IFN-gamma by resting PBMC. Its function is as follows. Associates with IL23A to form the IL-23 interleukin, a heterodimeric cytokine which functions in innate and adaptive immunity. IL-23 may constitute with IL-17 an acute response to infection in peripheral tissues. IL-23 binds to a heterodimeric receptor complex composed of IL12RB1 and IL23R, activates the Jak-Stat signaling cascade, stimulates memory rather than naive T-cells and promotes production of pro-inflammatory cytokines. IL-23 induces autoimmune inflammation and thus may be responsible for autoimmune inflammatory diseases and may be important for tumorigenesis. In Bos taurus (Bovine), this protein is Interleukin-12 subunit beta (IL12B).